Reading from the N-terminus, the 618-residue chain is Chaperone protein DnaK (618 aa).

Position 175 is a phosphothreonine; by autocatalysis (Thr175). The disordered stretch occupies residues 579-618; sequence GAPGAEGFDSNMAGEANAGQNANNDDNVVDADYKVEDDEK. A compositionally biased stretch (low complexity) spans 591 to 604; that stretch reads AGEANAGQNANNDD.

Belongs to the heat shock protein 70 family.

Acts as a chaperone. The polypeptide is Chaperone protein DnaK (Clostridium tetani (strain Massachusetts / E88)).